Reading from the N-terminus, the 379-residue chain is MKENELKNEKSVDVLSFKQLESQKIVLPQDLFRSSFTWFCYEIYKSLAFRIWMLLWLPLSVWWKLSNNWIYPLMVSLLVLFWGPVFVLVIFRLSRKRSLSKQLTQFCKEITKSTPSSDPHDWEVVAANLNSYLYENKAWNIRYFFFNAMGCQEAFRTTLLEPFSLKKDEAAKVKSFKDSVPYIEEALGVYFREVEKQWKLFNSEKSWSPVGLEDAKLPKEAYRFKLTWFLKRISNIFMLIPFLNFLCCIYVSRGMCLLLRTLYLGWILFMLVQGFQNIRVLIMSMEHKMQFLSTIINEQESGANGWDEIARKMNRYLFEKKVWKNEEFFFDGIDCEWFFSHFFYRVLSAKKSMRALSLNVELWPYIKEAQLSCSEESLA.

Helical transmembrane passes span 43–63 (IYKS…SVWW), 70–90 (IYPL…VLVI), 233–253 (ISNI…YVSR), and 255–275 (MCLL…VQGF).

It belongs to the DUP/COS family.

The protein localises to the membrane. This chain is Protein COS4 (COS4), found in Saccharomyces cerevisiae (strain ATCC 204508 / S288c) (Baker's yeast).